We begin with the raw amino-acid sequence, 87 residues long: Small ribosomal subunit protein bS20 (87 aa).

Residues 1 to 28 form a disordered region; that stretch reads MANIKSQQKRNRTNERARLRNKSVKSSL.

This sequence belongs to the bacterial ribosomal protein bS20 family.

Functionally, binds directly to 16S ribosomal RNA. This is Small ribosomal subunit protein bS20 from Mycobacterium marinum (strain ATCC BAA-535 / M).